We begin with the raw amino-acid sequence, 343 residues long: Putative adenosine/adenine deaminase (343 aa).

Residues His16, His18, and His204 each coordinate Zn(2+). Position 18 (His18) interacts with substrate. Glu207 functions as the Proton donor in the catalytic mechanism. Asp285 lines the Zn(2+) pocket. Asp286 is a binding site for substrate.

This sequence belongs to the metallo-dependent hydrolases superfamily. Adenosine and AMP deaminases family. Zn(2+) is required as a cofactor.

Its function is as follows. Putative nucleoside deaminase. May catalyze the hydrolytic deamination of adenosine or some similar substrate and play a role in purine metabolism. The sequence is that of Putative adenosine/adenine deaminase from Streptomyces coelicolor (strain ATCC BAA-471 / A3(2) / M145).